We begin with the raw amino-acid sequence, 153 residues long: UPF0768 protein PB2B2.18 (153 aa).

It belongs to the UPF0768 family.

This Schizosaccharomyces pombe (strain 972 / ATCC 24843) (Fission yeast) protein is UPF0768 protein PB2B2.18.